Here is a 291-residue protein sequence, read N- to C-terminus: Putative butyrophilin-like protein 10 pseudogene (291 aa).

A signal peptide spans 1–26; sequence MAVTCDPEAFLSICFVTLVFLQLPLA. Positions 27–146 constitute an Ig-like V-type domain; that stretch reads SIWKADFDVT…GEATVQVQVA (120 aa). Over 27–254 the chain is Extracellular; the sequence is SIWKADFDVT…RSSQFTAWKA (228 aa). The cysteines at positions 54 and 128 are disulfide-linked. Asn59 is a glycosylation site (N-linked (GlcNAc...) asparagine). A helical membrane pass occupies residues 255–275; the sequence is ALPLILVAMGLVIAGGICIFW. At 276-291 the chain is on the cytoplasmic side; that stretch reads KRQREKNKASLEEERE.

This sequence belongs to the immunoglobulin superfamily. BTN/MOG family.

The protein localises to the membrane. This is Putative butyrophilin-like protein 10 pseudogene from Homo sapiens (Human).